A 62-amino-acid chain; its full sequence is Large ribosomal subunit protein eL37 (62 aa).

Positions 20, 23, 35, and 38 each coordinate Zn(2+). The C4-type zinc-finger motif lies at 20–38 (CRRCGRRSYHVRKKACSAC).

It belongs to the eukaryotic ribosomal protein eL37 family. Requires Zn(2+) as cofactor.

Binds to the 23S rRNA. The sequence is that of Large ribosomal subunit protein eL37 from Methanococcus aeolicus (strain ATCC BAA-1280 / DSM 17508 / OCM 812 / Nankai-3).